A 72-amino-acid chain; its full sequence is Penaeidin-2d (72 aa).

An N-terminal signal peptide occupies residues 1-21 (MRLVVCLVFLASFALVCQGGA). Q22 is subject to Pyrrolidone carboxylic acid. 3 cysteine pairs are disulfide-bonded: C45/C59, C48/C66, and C60/C67. K71 carries the post-translational modification Lysine amide.

It belongs to the penaeidin family.

Its subcellular location is the cytoplasmic granule. Functionally, antibacterial and antifungal activity. Presents chitin-binding activity. The polypeptide is Penaeidin-2d (Penaeus setiferus (Atlantic white shrimp)).